A 232-amino-acid chain; its full sequence is Ribose-5-phosphate isomerase A (232 aa).

Substrate-binding positions include 31 to 34, 88 to 91, and 101 to 104; these read TGST, DGAD, and KGGG. The active-site Proton acceptor is glutamate 110. Lysine 128 is a substrate binding site.

This sequence belongs to the ribose 5-phosphate isomerase family. As to quaternary structure, homodimer.

The enzyme catalyses aldehydo-D-ribose 5-phosphate = D-ribulose 5-phosphate. Its pathway is carbohydrate degradation; pentose phosphate pathway; D-ribose 5-phosphate from D-ribulose 5-phosphate (non-oxidative stage): step 1/1. Catalyzes the reversible conversion of ribose-5-phosphate to ribulose 5-phosphate. This chain is Ribose-5-phosphate isomerase A, found in Lactobacillus gasseri (strain ATCC 33323 / DSM 20243 / BCRC 14619 / CIP 102991 / JCM 1131 / KCTC 3163 / NCIMB 11718 / NCTC 13722 / AM63).